The primary structure comprises 197 residues: Xanthine phosphoribosyltransferase (197 aa).

Residues L20 and N27 each contribute to the xanthine site. 128–132 (ANGQA) contributes to the 5-phospho-alpha-D-ribose 1-diphosphate binding site. Position 156 (K156) interacts with xanthine.

Belongs to the purine/pyrimidine phosphoribosyltransferase family. Xpt subfamily. Homodimer.

Its subcellular location is the cytoplasm. The catalysed reaction is XMP + diphosphate = xanthine + 5-phospho-alpha-D-ribose 1-diphosphate. The protein operates within purine metabolism; XMP biosynthesis via salvage pathway; XMP from xanthine: step 1/1. Functionally, converts the preformed base xanthine, a product of nucleic acid breakdown, to xanthosine 5'-monophosphate (XMP), so it can be reused for RNA or DNA synthesis. This is Xanthine phosphoribosyltransferase from Bacillus cereus (strain G9842).